A 229-amino-acid chain; its full sequence is Large ribosomal subunit protein uL1 (229 aa).

It belongs to the universal ribosomal protein uL1 family. As to quaternary structure, part of the 50S ribosomal subunit.

Its function is as follows. Binds directly to 23S rRNA. The L1 stalk is quite mobile in the ribosome, and is involved in E site tRNA release. Protein L1 is also a translational repressor protein, it controls the translation of the L11 operon by binding to its mRNA. The polypeptide is Large ribosomal subunit protein uL1 (Leifsonia xyli subsp. xyli (strain CTCB07)).